Consider the following 429-residue polypeptide: DNA primase DnaG (429 aa).

The Toprim domain maps to 172–246 (DSIIVVEGRN…DVDFIARAPP (75 aa)). The Mg(2+) site is built by E178, D220, and D222. Residues 287–322 (RNTKELEERQGNELKNERPEKINENEESEKNVELKE) form a disordered region.

It belongs to the archaeal DnaG primase family. Forms a ternary complex with MCM helicase and DNA. Component of the archaeal exosome complex. Mg(2+) is required as a cofactor.

It catalyses the reaction ssDNA + n NTP = ssDNA/pppN(pN)n-1 hybrid + (n-1) diphosphate.. Functionally, RNA polymerase that catalyzes the synthesis of short RNA molecules used as primers for DNA polymerase during DNA replication. Also part of the exosome, which is a complex involved in RNA degradation. Acts as a poly(A)-binding protein that enhances the interaction between heteromeric, adenine-rich transcripts and the exosome. The protein is DNA primase DnaG of Picrophilus torridus (strain ATCC 700027 / DSM 9790 / JCM 10055 / NBRC 100828 / KAW 2/3).